A 651-amino-acid polypeptide reads, in one-letter code: UvrABC system protein B (651 aa).

The 154-residue stretch at 25–178 (RGISCGAKEQ…CQLQERLVEL (154 aa)) folds into the Helicase ATP-binding domain. 38-45 (GVTGSGKT) contacts ATP. The Beta-hairpin motif lies at 91 to 114 (YYDYYQPEAYIPQSDVYIEKDALI). Positions 427 to 591 (DGQIHDVMCE…IVPRTIQKPV (165 aa)) constitute a Helicase C-terminal domain. The segment at 593-615 (TSLSERVGSSRKKVSRDTNTDPA) is disordered. In terms of domain architecture, UVR spans 616–651 (NRDIVELQKEMLLCAENLDFERAVEIRNEIKRLTAP).

The protein belongs to the UvrB family. Forms a heterotetramer with UvrA during the search for lesions. Interacts with UvrC in an incision complex.

The protein resides in the cytoplasm. Its function is as follows. The UvrABC repair system catalyzes the recognition and processing of DNA lesions. A damage recognition complex composed of 2 UvrA and 2 UvrB subunits scans DNA for abnormalities. Upon binding of the UvrA(2)B(2) complex to a putative damaged site, the DNA wraps around one UvrB monomer. DNA wrap is dependent on ATP binding by UvrB and probably causes local melting of the DNA helix, facilitating insertion of UvrB beta-hairpin between the DNA strands. Then UvrB probes one DNA strand for the presence of a lesion. If a lesion is found the UvrA subunits dissociate and the UvrB-DNA preincision complex is formed. This complex is subsequently bound by UvrC and the second UvrB is released. If no lesion is found, the DNA wraps around the other UvrB subunit that will check the other stand for damage. This is UvrABC system protein B from Anaplasma marginale (strain Florida).